Here is a 534-residue protein sequence, read N- to C-terminus: Prolyl 4-hydroxylase subunit alpha-1 (534 aa).

Positions 1-17 (MIWYILVVGILLPQSLA) are cleaved as a signal peptide. A glycan (N-linked (GlcNAc...) asparagine) is linked at Asn113. The stretch at 205–238 (VSVLDYLSYAVYQQGDLDKALLLTKKLLELDPEH) is one TPR repeat. Residues 258 to 277 (ANKSSSDDQSDQKTTLKKKG) form a disordered region. N-linked (GlcNAc...) asparagine glycosylation occurs at Asn259. The 109-residue stretch at 411-519 (TAEELQVANY…KWVSNKWLHE (109 aa)) folds into the Fe2OG dioxygenase domain. Positions 429, 431, and 500 each coordinate Fe cation. A 2-oxoglutarate-binding site is contributed by Lys510.

This sequence belongs to the P4HA family. As to quaternary structure, heterotetramer of two alpha-1 chains and two beta chains (P4HB)(the beta chain is the multi-functional PDI), where P4HB plays the role of a structural subunit; this tetramer catalyzes the formation of 4-hydroxyproline in collagen. Fe(2+) serves as cofactor. It depends on L-ascorbate as a cofactor.

It is found in the endoplasmic reticulum lumen. It catalyses the reaction L-prolyl-[collagen] + 2-oxoglutarate + O2 = trans-4-hydroxy-L-prolyl-[collagen] + succinate + CO2. Functionally, catalyzes the post-translational formation of 4-hydroxyproline in -Xaa-Pro-Gly- sequences in collagens and other proteins. This chain is Prolyl 4-hydroxylase subunit alpha-1 (P4HA1), found in Bos taurus (Bovine).